A 707-amino-acid polypeptide reads, in one-letter code: DNA-binding protein RFX2 (707 aa).

Serine 33 bears the Phosphoserine mark. Residues 204-279 constitute a DNA-binding region (RFX-type winged-helix); sequence HLQWLLDNYE…YHYYGIRLKP (76 aa). The tract at residues 297–337 is disordered; sequence QQPVHQKPRYRPAQKTDSLGESGSHSSLHSTPEQAMAAQSQ. Residues 315 to 337 are compositionally biased toward low complexity; that stretch reads LGESGSHSSLHSTPEQAMAAQSQ. Residue serine 420 is modified to Phosphoserine.

The protein belongs to the RFX family. In terms of assembly, homodimer; probably only forms homodimers in testis. Heterodimer; heterodimerizes with RFX1 and RFX3.

The protein localises to the nucleus. The protein resides in the cytoplasm. In terms of biological role, transcription factor that acts as a key regulator of spermatogenesis. Acts by regulating expression of genes required for the haploid phase during spermiogenesis, such as genes required for cilium assembly and function. Recognizes and binds the X-box, a regulatory motif with DNA sequence 5'-GTNRCC(0-3N)RGYAAC-3' present on promoters. Probably activates transcription of the testis-specific histone gene H1-6. The chain is DNA-binding protein RFX2 (RFX2) from Bos taurus (Bovine).